The primary structure comprises 535 residues: Methylmalonate-semialdehyde/malonate-semialdehyde dehydrogenase [acylating], mitochondrial (535 aa).

The N-terminal 32 residues, 1–32 (MAAAVAAAAAMRSRILQVSSKVNATWYPASSF), are a transit peptide targeting the mitochondrion. An N6-acetyllysine; alternate mark is found at Lys47, Lys52, Lys55, and Lys76. An N6-succinyllysine; alternate mark is found at Lys47, Lys52, Lys55, and Lys76. Lys87 is modified (N6-acetyllysine). N6-acetyllysine; alternate is present on residues Lys117 and Lys129. Lys117 and Lys129 each carry N6-succinyllysine; alternate. Positions 183, 185, 209, 212, 213, and 262 each coordinate NAD(+). At Ser262 the chain carries Phosphoserine. Lys298 bears the N6-acetyllysine mark. Residue Cys317 is the Nucleophile of the active site. 2 positions are modified to N6-acetyllysine: Lys330 and Lys331. 2 positions are modified to N6-acetyllysine; alternate: Lys364 and Lys376. N6-succinyllysine; alternate is present on residues Lys364 and Lys376. Ser380 is modified (phosphoserine). Lys391 is subject to N6-succinyllysine. An NAD(+)-binding site is contributed by Glu417. Lys500 carries the post-translational modification N6-acetyllysine. The residue at position 517 (Lys517) is an N6-succinyllysine.

It belongs to the aldehyde dehydrogenase family. In terms of assembly, homotetramer. Acetylation of Lys-55; Lys-117 and Lys-331 is observed in liver mitochondria from fasted mice but not from fed mice.

It localises to the mitochondrion. The catalysed reaction is 3-oxopropanoate + NAD(+) + CoA + H2O = hydrogencarbonate + acetyl-CoA + NADH + H(+). The enzyme catalyses 2-methyl-3-oxopropanoate + NAD(+) + CoA + H2O = propanoyl-CoA + hydrogencarbonate + NADH + H(+). It catalyses the reaction (R)-2-methyl-3-oxopropanoate + NAD(+) + CoA + H2O = propanoyl-CoA + hydrogencarbonate + NADH + H(+). It carries out the reaction (S)-2-methyl-3-oxopropanoate + NAD(+) + CoA + H2O = propanoyl-CoA + hydrogencarbonate + NADH + H(+). Malonate and methylmalonate semialdehyde dehydrogenase involved in the catabolism of valine, thymine, and compounds catabolized by way of beta-alanine, including uracil and cytidine. The polypeptide is Methylmalonate-semialdehyde/malonate-semialdehyde dehydrogenase [acylating], mitochondrial (Mus musculus (Mouse)).